A 914-amino-acid polypeptide reads, in one-letter code: Calcium-activated chloride channel regulator 1 (914 aa).

A signal peptide spans 1 to 21; it reads MGPFKSSVFILILHLLEGALS. Residues 46-199 form a metalloprotease domain region; it reads DETLIQQIKD…GITGTNVVKK (154 aa). Histidine 156 provides a ligand contact to Zn(2+). The active site involves glutamate 157. Residues histidine 160 and aspartate 167 each coordinate Zn(2+). Residues 306 to 475 enclose the VWFA domain; that stretch reads IVCLVLDKSG…NGLIDAFGAL (170 aa). Asparagine 503, asparagine 585, asparagine 770, asparagine 804, asparagine 810, asparagine 831, asparagine 836, and asparagine 890 each carry an N-linked (GlcNAc...) asparagine glycan.

The protein belongs to the CLCR family. Post-translationally, glycosylated. In terms of processing, the 125-kDa product is autoproteolytically processed by the metalloprotease domain and yields to two cell-surface-associated subunits, a 90-kDa protein and a group of 37- to 41-kDa proteins. The cleavage is necessary for calcium-activated chloride channel (CaCC) activation activity. Highly expressed in small intestine and colon namely in intestinal basal crypt epithelia and goblet cells, and appendix. Weakly expressed in uterus, testis and kidney. Expressed in the airways epithelium of both asthmatic and healthy patients. Expressed in the bronchial epithelium, especially in mucus-producing goblet cells. Expressed in normal turbinate mucosa and nasal polyp. Expressed in.

It is found in the secreted. It localises to the extracellular space. The protein localises to the cell membrane. May be involved in mediating calcium-activated chloride conductance. May play critical roles in goblet cell metaplasia, mucus hypersecretion, cystic fibrosis and AHR. May be involved in the regulation of mucus production and/or secretion by goblet cells. Involved in the regulation of tissue inflammation in the innate immune response. May play a role as a tumor suppressor. Induces MUC5AC. The sequence is that of Calcium-activated chloride channel regulator 1 (CLCA1) from Homo sapiens (Human).